The sequence spans 339 residues: NADH-quinone oxidoreductase subunit H (339 aa).

Helical transmembrane passes span 9–29 (IFPLIIIALKVVAITIPLILC), 50–70 (PNVVGPFGLLQPIADAVKLLF), 82–102 (ILFILAPMITFILSLIGWAVI), 115–135 (VGVLYILAISSLSVYGIIIAG), 161–181 (MGLVIITVLLTTGTLNLSEII), 187–207 (IPWWIDLMLLPMGVVFFISVL), 235–255 (MGFALFFLGEYANMILVSAMT), 275–295 (IPGFFWFVFKVGFLLFCFLWI), and 311–331 (GWKVFLPLTLFWVVLVSSVLV).

Belongs to the complex I subunit 1 family. As to quaternary structure, NDH-1 is composed of 14 different subunits. Subunits NuoA, H, J, K, L, M, N constitute the membrane sector of the complex.

The protein localises to the cell inner membrane. It carries out the reaction a quinone + NADH + 5 H(+)(in) = a quinol + NAD(+) + 4 H(+)(out). In terms of biological role, NDH-1 shuttles electrons from NADH, via FMN and iron-sulfur (Fe-S) centers, to quinones in the respiratory chain. The immediate electron acceptor for the enzyme in this species is believed to be ubiquinone. Couples the redox reaction to proton translocation (for every two electrons transferred, four hydrogen ions are translocated across the cytoplasmic membrane), and thus conserves the redox energy in a proton gradient. This subunit may bind ubiquinone. This chain is NADH-quinone oxidoreductase subunit H, found in Rickettsia rickettsii (strain Iowa).